The sequence spans 245 residues: 1-(5-phosphoribosyl)-5-[(5-phosphoribosylamino)methylideneamino] imidazole-4-carboxamide isomerase (245 aa).

The active-site Proton acceptor is Asp-7. The active-site Proton donor is the Asp-129.

The protein belongs to the HisA/HisF family.

The protein resides in the cytoplasm. It catalyses the reaction 1-(5-phospho-beta-D-ribosyl)-5-[(5-phospho-beta-D-ribosylamino)methylideneamino]imidazole-4-carboxamide = 5-[(5-phospho-1-deoxy-D-ribulos-1-ylimino)methylamino]-1-(5-phospho-beta-D-ribosyl)imidazole-4-carboxamide. It functions in the pathway amino-acid biosynthesis; L-histidine biosynthesis; L-histidine from 5-phospho-alpha-D-ribose 1-diphosphate: step 4/9. This Vibrio vulnificus (strain CMCP6) protein is 1-(5-phosphoribosyl)-5-[(5-phosphoribosylamino)methylideneamino] imidazole-4-carboxamide isomerase.